Here is a 1455-residue protein sequence, read N- to C-terminus: MFSMCKQTHSATAVEFSIACRFFNNLDENLVVAGANVLKVYRIAPNVEASQRQKLNPSEMRLAPKMRLECLATYTLYGNVMSLQCVSLAGAMRDALLISFKDAKLSVLQHDPDTFALKTLSLHYFEEDDIRGGWTGRYFVPTVRVDPDSRCAVMLVYGKRLVVLPFRKDNSLDEIELADVKPIKKAPTAMVSRTPIMASYLIALRDLDEKIDNVLDIQFLHGYYEPTLLILYEPVRTCPGRIKVRSDTCVLVAISLNIQQRVHPIIWTVNSLPFDCLQVYPIQKPIGGCLVMTVNAVIYLNQSVPPYGVSLNSSADNSTAFPLKPQDGVRISLDCANFAFIDVDKLVISLRTGDLYVLTLCVDSMRTVRNFHFHKAAASVLTSCICVLHSEYIFLGSRLGNSLLLHFTEEDQSTVITLDEVEQQSEQQQRNLQDEDQNLEEIFDVDQLEMAPTQAKSRRIEDEELEVYGSGAKASVLQLRKFIFEVCDSLMNVAPINYMCAGERVEFEEDGVTLRPHAESLQDLKIELVAATGHSKNGALSVFVNCINPQIITSFELDGCLDVWTVFDDATKKSSRNDQHDFMLLSQRNSTLVLQTGQEINEIENTGFTVNQPTIFVGNLGQQRFIVQVTTRHVRLLQGTRLIQNVPIDVGSPVVQVSIADPYVCLRVLNGQVITLALRETRGTPRLAINKHTISSSPAVVAISAYKDLSGLFTVKGDDINLTGSSNSAFGHSFGGYMKAEPNMKVEDEEDLLYGDAGSAFKMNSMADLAKQSKQKNSDWWRRLLVQAKPSYWLVVARQSGTLEIYSMPDMKLVYLVNDVGNGSMVLTDAMEFVPISLTTQENSKAGIVQACMPQHANSPLPLELSVIGLGLNGERPLLLVRTRVELLIYQVFRYPKGHLKIRFRKMDQLNLLDQQPTHIDLDENDEQEEIESYQMQPKYVQKLRPFANVGGLSGVMVCGVNPCFVFLTFRGELRIHRLLGNGDVRSFAAFNNVNIPNGFLYFDTTYELKISVLPSYLSYDSVWPVRKVPLRCTPRQLVYHRENRVYCLITQTEEPMTKYYRFNGEDKELSEESRGERFIYPIGSQFEMVLISPETWEIVPDASITFEPWEHVTAFKIVKLSYEGTRSGLKEYLCIGTNFNYSEDITSRGNIHIYDIIEVVPEPGKPMTKFKIKEIFKKEQKGPVSAISDVLGFLVTGLGQKIYIWQLRDGDLIGVAFIDTNIYVHQIITVKSLIFIADVYKSISLLRFQEEYRTLSLASRDFNPLEVYGIEFMVDNSNLGFLVTDAERNIIVYMYQPEARESLGGQKLLRKADYHLGQVVNTMFRVQCHQKGLHQRQPFLYENKHFVVYGTLDGALGYCLPLPEKVYRRFLMLQNVLLSYQEHLCGLNPKEYRTLKSSKKQGINPSRCIIDGDLIWSYRLMANSERNEVAKKIGTRTEEILGDLLEIERLASVF.

This sequence belongs to the CPSF1 family. In terms of assembly, component of the cleavage and polyadenylation specificity factor (CPSF) complex, composed of at least Clp, Cpsf73, Cpsf100 and Cpsf160.

The protein resides in the nucleus. In terms of biological role, component of the cleavage and polyadenylation specificity factor (CPSF) complex that plays a key role in pre-mRNA 3'-end formation, recognizing the AAUAAA signal sequence and interacting with poly(A) polymerase and other factors to bring about cleavage and poly(A) addition. This subunit is involved in the RNA recognition step of the polyadenylation reaction. The chain is Cleavage and polyadenylation specificity factor subunit 1 (Cpsf160) from Drosophila melanogaster (Fruit fly).